The primary structure comprises 402 residues: Tyrosine-protein kinase transforming protein ros (402 aa).

Residues 98–377 (LNLHKLLGSG…KLQEIRHSPL (280 aa)) form the Protein kinase domain. ATP is bound by residues 104 to 112 (LGSGAFGEV) and Lys133. The Proton acceptor role is filled by Asp232. Tyr268 carries the post-translational modification Phosphotyrosine; by autocatalysis.

This sequence belongs to the protein kinase superfamily. Tyr protein kinase family. Insulin receptor subfamily.

The catalysed reaction is L-tyrosyl-[protein] + ATP = O-phospho-L-tyrosyl-[protein] + ADP + H(+). This chain is Tyrosine-protein kinase transforming protein ros (V-ROS), found in Galliformes (UR2SV).